Reading from the N-terminus, the 737-residue chain is Protein kinase C epsilon type (737 aa).

A C2 domain is found at 1 to 117 (MVVFNGLLKI…NGSRHFEDWI (117 aa)). Position 62 is a phosphoserine (serine 62). A Phorbol-ester/DAG-type 1 zinc finger spans residues 169–220 (GHKFMATYLRQPTYCSHCRDFIWGVIGKQGYQCQVCTCVVHKRCHELIITKC). An Interaction with actin motif is present at residues 223–228 (LKKQET). Phosphothreonine is present on threonine 228. Serine 234 carries the phosphoserine modification. The Phorbol-ester/DAG-type 2 zinc finger occupies 242 to 292 (PHKFGIHNYKVPTFCDHCGSLLWGLLRQGLQCKVCKMNVHRRCETNVAPNC). A Phosphothreonine modification is found at threonine 309. Positions 310 to 356 (PDKITNSGQRRKKLAAGAESPQPASGNSPSEDDRSKSAPTSPCDQEL) are disordered. A phosphoserine mark is found at serine 316, serine 329, serine 337, and serine 346. Threonine 349 carries the post-translational modification Phosphothreonine. At serine 350 the chain carries Phosphoserine; by MAPK11 and MAPK14. Phosphoserine is present on residues serine 368 and serine 388. The interval 369–398 (FDNRGEEHRASSSTDGQLASPGENGEVRQG) is disordered. One can recognise a Protein kinase domain in the interval 408 to 668 (FNFIKVLGKG…EDAIKQHPFF (261 aa)). ATP contacts are provided by residues 414 to 422 (LGKGSFGKV) and lysine 437. Residue aspartate 532 is the Proton acceptor of the active site. Residue threonine 566 is modified to Phosphothreonine; by PDPK1. An AGC-kinase C-terminal domain is found at 669-737 (KEIDWVLLEQ…FSYFGEDLMP (69 aa)). A phosphothreonine mark is found at threonine 703 and threonine 710. At serine 729 the chain carries Phosphoserine.

Belongs to the protein kinase superfamily. AGC Ser/Thr protein kinase family. PKC subfamily. Forms a ternary complex with TRIM63 and RACK1/GN2BL1. Can form a complex with PDLIM5 and N-type calcium channel. Interacts with COPB1. Interacts with DGKQ. Interacts with STAT3. Interacts with YWHAB. Interacts with HSP90AB1; promotes functional activation in a heat shock-dependent manner. Interacts (via phorbol-ester/DAG-type 2 domain) with PRPH and VIM. Interacts with NLRP5/MATER. Phosphorylation on Thr-566 by PDPK1 triggers autophosphorylation on Ser-729. Phosphorylation in the hinge domain at Ser-350 by MAPK11 or MAPK14, Ser-346 by GSK3B and Ser-368 by autophosphorylation is required for interaction with YWHAB. In response to growth factors, phosphorylated at Thr-703 and Ser-729 by the mTORC2 complex, promoting autophosphorylation and activation of PRKCE.

Its subcellular location is the cytoplasm. It localises to the cytoskeleton. The protein resides in the cell membrane. It is found in the perinuclear region. The protein localises to the nucleus. It carries out the reaction L-seryl-[protein] + ATP = O-phospho-L-seryl-[protein] + ADP + H(+). The enzyme catalyses L-threonyl-[protein] + ATP = O-phospho-L-threonyl-[protein] + ADP + H(+). Novel PKCs (PRKCD, PRKCE, PRKCH and PRKCQ) are calcium-insensitive, but activated by diacylglycerol (DAG) and phosphatidylserine. Three specific sites; Thr-566 (activation loop of the kinase domain), Thr-710 (turn motif) and Ser-729 (hydrophobic region), need to be phosphorylated for its full activation. Functionally, calcium-independent, phospholipid- and diacylglycerol (DAG)-dependent serine/threonine-protein kinase that plays essential roles in the regulation of multiple cellular processes linked to cytoskeletal proteins, such as cell adhesion, motility, migration and cell cycle, functions in neuron growth and ion channel regulation, and is involved in immune response, cancer cell invasion and regulation of apoptosis. Mediates cell adhesion to the extracellular matrix via integrin-dependent signaling, by mediating angiotensin-2-induced activation of integrin beta-1 (ITGB1) in cardiac fibroblasts. Phosphorylates MARCKS, which phosphorylates and activates PTK2/FAK, leading to the spread of cardiomyocytes. Involved in the control of the directional transport of ITGB1 in mesenchymal cells by phosphorylating vimentin (VIM), an intermediate filament (IF) protein. In epithelial cells, associates with and phosphorylates keratin-8 (KRT8), which induces targeting of desmoplakin at desmosomes and regulates cell-cell contact. Phosphorylates IQGAP1, which binds to CDC42, mediating epithelial cell-cell detachment prior to migration. During cytokinesis, forms a complex with YWHAB, which is crucial for daughter cell separation, and facilitates abscission by a mechanism which may implicate the regulation of RHOA. In cardiac myocytes, regulates myofilament function and excitation coupling at the Z-lines, where it is indirectly associated with F-actin via interaction with COPB1. During endothelin-induced cardiomyocyte hypertrophy, mediates activation of PTK2/FAK, which is critical for cardiomyocyte survival and regulation of sarcomere length. Plays a role in the pathogenesis of dilated cardiomyopathy via persistent phosphorylation of troponin I (TNNI3). Involved in nerve growth factor (NFG)-induced neurite outgrowth and neuron morphological change independently of its kinase activity, by inhibition of RHOA pathway, activation of CDC42 and cytoskeletal rearrangement. May be involved in presynaptic facilitation by mediating phorbol ester-induced synaptic potentiation. Phosphorylates gamma-aminobutyric acid receptor subunit gamma-2 (GABRG2), which reduces the response of GABA receptors to ethanol and benzodiazepines and may mediate acute tolerance to the intoxicating effects of ethanol. Upon PMA treatment, phosphorylates the capsaicin- and heat-activated cation channel TRPV1, which is required for bradykinin-induced sensitization of the heat response in nociceptive neurons. Is able to form a complex with PDLIM5 and N-type calcium channel, and may enhance channel activities and potentiates fast synaptic transmission by phosphorylating the pore-forming alpha subunit CACNA1B (CaV2.2). Downstream of TLR4, plays an important role in the lipopolysaccharide (LPS)-induced immune response by phosphorylating and activating TICAM2/TRAM, which in turn activates the transcription factor IRF3 and subsequent cytokines production. In differentiating erythroid progenitors, is regulated by EPO and controls the protection against the TNFSF10/TRAIL-mediated apoptosis, via BCL2. May be involved in the regulation of the insulin-induced phosphorylation and activation of AKT1. Phosphorylates NLRP5/MATER and may thereby modulate AKT pathway activation in cumulus cells. Phosphorylates and activates LRRK1, which phosphorylates RAB proteins involved in intracellular trafficking. The chain is Protein kinase C epsilon type (Prkce) from Rattus norvegicus (Rat).